The primary structure comprises 434 residues: ATP-dependent protease ATPase subunit HslU (434 aa).

Residues Val-18, 60 to 65 (GVGKTE), Asp-247, Glu-312, and Arg-384 each bind ATP.

This sequence belongs to the ClpX chaperone family. HslU subfamily. As to quaternary structure, a double ring-shaped homohexamer of HslV is capped on each side by a ring-shaped HslU homohexamer. The assembly of the HslU/HslV complex is dependent on binding of ATP.

The protein resides in the cytoplasm. Its function is as follows. ATPase subunit of a proteasome-like degradation complex; this subunit has chaperone activity. The binding of ATP and its subsequent hydrolysis by HslU are essential for unfolding of protein substrates subsequently hydrolyzed by HslV. HslU recognizes the N-terminal part of its protein substrates and unfolds these before they are guided to HslV for hydrolysis. The sequence is that of ATP-dependent protease ATPase subunit HslU from Rhodopseudomonas palustris (strain BisB18).